We begin with the raw amino-acid sequence, 25 residues long: FFGSLLSLGSKLLPSVFKLFQRKKE.

Expressed by the venom gland.

The protein resides in the secreted. Its subcellular location is the target cell membrane. Its function is as follows. Amphipathic peptide that shows antibacterial activity against E.coli (MIC=12.5 ug/ml) and S.aureus (MIC=12.5 ug/ml). Has hemolytic activity against human erythrocytes (25 uM provokes 83% of hemolysis). May act by disrupting the integrity of the bacterial cell membrane. Increases efficacy of antibiotics (ethambutol, pyrazinamide, isoniazid, rifampicin) when tested against S.aureus, probably by facilitating their incorporation into the bacteria. In Centruroides suffusus (Durango bark scorpion), this protein is Css54.